A 264-amino-acid polypeptide reads, in one-letter code: MAGEQKPSSNLLEQFILLAKGTSGSALTALISQVLEAPGVYVFGELLELANVQELAEGANAAYLQLLNLFAYGTYPDYIANKESLPELSTAQQNKLKHLTIVSLASRMKCIPYSVLLKDLEMRNLRELEDLIIEAVYTDIIQGKLDQRNQLLEVDFCIGRDIRKKDINNIVKTLHEWCDGCEAVLLGIEQQVLRANQYKENHNRTQQQVEAEVTNIKKTLKATASSSAQEMEQQLAERECPPHAEQRQPTKKMSKVKGLVSSRH.

Ala2 carries the post-translational modification N-acetylalanine. The 158-residue stretch at Ala2–Gly159 folds into the PCI domain. A coiled-coil region spans residues Ile188–Glu237. The segment covering Thr223–Glu232 has biased composition (polar residues). The segment at Thr223–His264 is disordered. The span at Leu235 to Gln248 shows a compositional bias: basic and acidic residues. Ser261 carries the phosphothreonine modification. Arg263 carries the post-translational modification Phosphoserine.

Belongs to the CSN7/EIF3M family. CSN7 subfamily. In terms of assembly, component of the CSN complex, composed of COPS1/GPS1, COPS2, COPS3, COPS4, COPS5, COPS6, COPS7 (COPS7A or COPS7B), COPS8 and COPS9 isoform 1. In the complex, it probably interacts directly with COPS1, COPS2, COPS4, COPS5, COPS6 and COPS8. Interacts with EIF3S6. As to quaternary structure, (Microbial infection) Interacts with vaccinia virus protein C9L.

The protein resides in the cytoplasm. Its subcellular location is the nucleus. In terms of biological role, component of the COP9 signalosome complex (CSN), a complex involved in various cellular and developmental processes. The CSN complex is an essential regulator of the ubiquitin (Ubl) conjugation pathway by mediating the deneddylation of the cullin subunits of SCF-type E3 ligase complexes, leading to decrease the Ubl ligase activity of SCF-type complexes such as SCF, CSA or DDB2. The complex is also involved in phosphorylation of p53/TP53, JUN, I-kappa-B-alpha/NFKBIA, ITPK1 and IRF8/ICSBP, possibly via its association with CK2 and PKD kinases. CSN-dependent phosphorylation of TP53 and JUN promotes and protects degradation by the Ubl system, respectively. This Homo sapiens (Human) protein is COP9 signalosome complex subunit 7b (COPS7B).